The chain runs to 232 residues: Orotidine 5'-phosphate decarboxylase (232 aa).

Substrate is bound by residues Asp12, Lys34, 61–70 (DMKLLDIDNT), Thr116, Arg177, Gln186, Gly206, and Arg207. The Proton donor role is filled by Lys63.

This sequence belongs to the OMP decarboxylase family. Type 1 subfamily. As to quaternary structure, homodimer.

It catalyses the reaction orotidine 5'-phosphate + H(+) = UMP + CO2. Its pathway is pyrimidine metabolism; UMP biosynthesis via de novo pathway; UMP from orotate: step 2/2. In terms of biological role, catalyzes the decarboxylation of orotidine 5'-monophosphate (OMP) to uridine 5'-monophosphate (UMP). In Sinorhizobium medicae (strain WSM419) (Ensifer medicae), this protein is Orotidine 5'-phosphate decarboxylase.